Reading from the N-terminus, the 140-residue chain is Large ribosomal subunit protein uL16 (140 aa).

This sequence belongs to the universal ribosomal protein uL16 family. Part of the 50S ribosomal subunit.

Functionally, binds 23S rRNA and is also seen to make contacts with the A and possibly P site tRNAs. The sequence is that of Large ribosomal subunit protein uL16 from Phytoplasma mali (strain AT).